A 142-amino-acid chain; its full sequence is MATERTLAILKPDCVRKEKVGEVLRRIQDAGFQLCAMKMITMSKAEAEGFYAVHEDKPFFDDLTDFMSSGPCVPVVLEKENAIADFRELIGATDPDEAAEGTIRSDFAGSIQENIVHGSDSPSNGQKEAGYFFPEHEIVANT.

ATP is bound by residues K11, F59, R87, T93, R104, and N114. The active-site Pros-phosphohistidine intermediate is H117.

The protein belongs to the NDK family. Homotetramer. The cofactor is Mg(2+).

The protein resides in the cytoplasm. It catalyses the reaction a 2'-deoxyribonucleoside 5'-diphosphate + ATP = a 2'-deoxyribonucleoside 5'-triphosphate + ADP. The enzyme catalyses a ribonucleoside 5'-diphosphate + ATP = a ribonucleoside 5'-triphosphate + ADP. Major role in the synthesis of nucleoside triphosphates other than ATP. The ATP gamma phosphate is transferred to the NDP beta phosphate via a ping-pong mechanism, using a phosphorylated active-site intermediate. The sequence is that of Nucleoside diphosphate kinase from Salinibacter ruber (strain DSM 13855 / M31).